The chain runs to 442 residues: UDP-glycosyltransferase 78D4 (442 aa).

UDP-alpha-D-glucose is bound by residues 322-324, 339-347, and 361-364; these read APQ, HGGWNSVLE, and FGDH.

It belongs to the UDP-glycosyltransferase family.

This is UDP-glycosyltransferase 78D4 (UGT78D4) from Arabidopsis thaliana (Mouse-ear cress).